Consider the following 115-residue polypeptide: Putative gamma-glutamylcyclotransferase VC_2546 (115 aa).

Position 8-11 (8-11 (YGTL)) interacts with substrate. Glu-73 acts as the Proton acceptor in catalysis.

Belongs to the gamma-glutamylcyclotransferase family.

Its function is as follows. Putative gamma-glutamylcyclotransferase. The chain is Putative gamma-glutamylcyclotransferase VC_2546 from Vibrio cholerae serotype O1 (strain ATCC 39315 / El Tor Inaba N16961).